We begin with the raw amino-acid sequence, 274 residues long: Penicillin-insensitive murein endopeptidase (274 aa).

An N-terminal signal peptide occupies residues 1–19 (MNKTAIALLALLASSASLA). Intrachain disulfides connect C44–C265, C187–C235, and C216–C223. Residues H110, H113, D120, D147, H150, and H211 each contribute to the Zn(2+) site. Residues 227–274 (PLPPPGDGCGAELQSWFEPPKPGTTKPEKKTPPPLPPSCQALLDEHVI) are disordered.

Belongs to the peptidase M74 family. Dimer. The cofactor is Zn(2+).

The protein localises to the periplasm. In terms of biological role, murein endopeptidase that cleaves the D-alanyl-meso-2,6-diamino-pimelyl amide bond that connects peptidoglycan strands. Likely plays a role in the removal of murein from the sacculus. This chain is Penicillin-insensitive murein endopeptidase, found in Escherichia coli O17:K52:H18 (strain UMN026 / ExPEC).